The following is a 639-amino-acid chain: DNA gyrase subunit B (639 aa).

The span at Gln-392–Ala-402 shows a compositional bias: basic and acidic residues. Residues Gln-392–Ser-417 are disordered. The region spanning Ser-423–Pro-537 is the Toprim domain. Mg(2+)-binding residues include Glu-429, Asp-502, and Asp-504.

The protein belongs to the type II topoisomerase GyrB family. As to quaternary structure, heterotetramer, composed of two GyrA and two GyrB chains. In the heterotetramer, GyrA contains the active site tyrosine that forms a transient covalent intermediate with DNA, while GyrB binds cofactors and catalyzes ATP hydrolysis. Requires Mg(2+) as cofactor. Mn(2+) serves as cofactor. The cofactor is Ca(2+).

It localises to the cytoplasm. It carries out the reaction ATP-dependent breakage, passage and rejoining of double-stranded DNA.. Its function is as follows. A type II topoisomerase that negatively supercoils closed circular double-stranded (ds) DNA in an ATP-dependent manner to modulate DNA topology and maintain chromosomes in an underwound state. Negative supercoiling favors strand separation, and DNA replication, transcription, recombination and repair, all of which involve strand separation. Also able to catalyze the interconversion of other topological isomers of dsDNA rings, including catenanes and knotted rings. Type II topoisomerases break and join 2 DNA strands simultaneously in an ATP-dependent manner. The chain is DNA gyrase subunit B from Haloferax lucentense (strain DSM 14919 / JCM 9276 / NCIMB 13854 / Aa 2.2) (Haloferax alicantei).